A 187-amino-acid chain; its full sequence is Elongation factor P (187 aa).

This sequence belongs to the elongation factor P family.

It localises to the cytoplasm. Its pathway is protein biosynthesis; polypeptide chain elongation. Involved in peptide bond synthesis. Stimulates efficient translation and peptide-bond synthesis on native or reconstituted 70S ribosomes in vitro. Probably functions indirectly by altering the affinity of the ribosome for aminoacyl-tRNA, thus increasing their reactivity as acceptors for peptidyl transferase. This is Elongation factor P from Brachyspira hyodysenteriae (strain ATCC 49526 / WA1).